The sequence spans 163 residues: Transcriptional repressor NrdR (163 aa).

A zinc finger spans residues 3 to 34 (CPKCNYLKSSVVDSRQAEEGNTIRRRRECENC). In terms of domain architecture, ATP-cone spans 49–139 (LLVVKKDGTR…VYRSFKDVDE (91 aa)).

The protein belongs to the NrdR family. Requires Zn(2+) as cofactor.

Negatively regulates transcription of bacterial ribonucleotide reductase nrd genes and operons by binding to NrdR-boxes. This chain is Transcriptional repressor NrdR, found in Streptococcus mutans serotype c (strain ATCC 700610 / UA159).